Here is a 240-residue protein sequence, read N- to C-terminus: Eukaryotic translation initiation factor 3 subunit K (240 aa).

The 181-residue stretch at 41 to 221 (YDKDIVLTIL…TIKTRNIDEK (181 aa)) folds into the PCI domain.

It belongs to the eIF-3 subunit K family. Component of the eukaryotic translation initiation factor 3 (eIF-3) complex.

It is found in the cytoplasm. Its function is as follows. Component of the eukaryotic translation initiation factor 3 (eIF-3) complex, which is involved in protein synthesis of a specialized repertoire of mRNAs and, together with other initiation factors, stimulates binding of mRNA and methionyl-tRNAi to the 40S ribosome. The eIF-3 complex specifically targets and initiates translation of a subset of mRNAs involved in cell proliferation. The sequence is that of Eukaryotic translation initiation factor 3 subunit K from Caenorhabditis briggsae.